Consider the following 103-residue polypeptide: Nucleoid-associated protein CFF8240_0066 (103 aa).

The protein belongs to the YbaB/EbfC family. In terms of assembly, homodimer.

The protein resides in the cytoplasm. The protein localises to the nucleoid. Its function is as follows. Binds to DNA and alters its conformation. May be involved in regulation of gene expression, nucleoid organization and DNA protection. The sequence is that of Nucleoid-associated protein CFF8240_0066 from Campylobacter fetus subsp. fetus (strain 82-40).